Consider the following 430-residue polypeptide: Enolase (430 aa).

Residue Gln163 participates in (2R)-2-phosphoglycerate binding. Glu205 serves as the catalytic Proton donor. Mg(2+) contacts are provided by Asp242, Glu286, and Asp313. (2R)-2-phosphoglycerate contacts are provided by Lys338, Arg367, Ser368, and Lys389. Lys338 serves as the catalytic Proton acceptor.

It belongs to the enolase family. The cofactor is Mg(2+).

It localises to the cytoplasm. It is found in the secreted. Its subcellular location is the cell surface. The enzyme catalyses (2R)-2-phosphoglycerate = phosphoenolpyruvate + H2O. It participates in carbohydrate degradation; glycolysis; pyruvate from D-glyceraldehyde 3-phosphate: step 4/5. Its function is as follows. Catalyzes the reversible conversion of 2-phosphoglycerate (2-PG) into phosphoenolpyruvate (PEP). It is essential for the degradation of carbohydrates via glycolysis. The polypeptide is Enolase (Geotalea daltonii (strain DSM 22248 / JCM 15807 / FRC-32) (Geobacter daltonii)).